We begin with the raw amino-acid sequence, 539 residues long: Gamma-2-syntrophin (539 aa).

The 84-residue stretch at 73 to 156 folds into the PDZ domain; it reads TVTLRRQPVG…EVTITVEYLR (84 aa). 2 stretches are compositionally biased toward low complexity: residues 168–183 and 194–205; these read SPGP…SSPL and SSTTAPSSPSSP. A disordered region spans residues 168–209; sequence SPGPSSDHSSGASSPLFDSGLHLNGNSSTTAPSSPSSPIAKD. Residues 296–421 enclose the PH domain; it reads QVVHMGWVNE…WEKSFQRATF (126 aa).

It belongs to the syntrophin family. Interacts with the dystrophin protein DMD and related proteins DTNA and DTNB. In terms of tissue distribution, widely expressed. Strong expression in brain and testis. In CNS, it is expressed in the perikaryon and proximal portion of the neuronal processes. Strong expression in the hippocampus, neuron-rich dendate granule cells, and pyramidal cell layers. Highly expressed in neurons of the cerebral cortex. Also expressed in the cerebellar cortex, deep cerebellar nuclei, thalamus, and basal ganglia.

It localises to the cell membrane. It is found in the sarcolemma. The protein localises to the cytoplasm. Its subcellular location is the cytoskeleton. Functionally, adapter protein that binds to and probably organizes the subcellular localization of a variety of proteins. May link various receptors to the actin cytoskeleton and the dystrophin glycoprotein complex. This is Gamma-2-syntrophin (SNTG2) from Homo sapiens (Human).